A 116-amino-acid polypeptide reads, in one-letter code: Ribosome-binding factor A (116 aa).

Belongs to the RbfA family. As to quaternary structure, monomer. Binds 30S ribosomal subunits, but not 50S ribosomal subunits or 70S ribosomes.

The protein resides in the cytoplasm. In terms of biological role, one of several proteins that assist in the late maturation steps of the functional core of the 30S ribosomal subunit. Associates with free 30S ribosomal subunits (but not with 30S subunits that are part of 70S ribosomes or polysomes). Required for efficient processing of 16S rRNA. May interact with the 5'-terminal helix region of 16S rRNA. The polypeptide is Ribosome-binding factor A (Clostridium botulinum (strain Alaska E43 / Type E3)).